The chain runs to 129 residues: Small ribosomal subunit protein uS11 (129 aa).

It belongs to the universal ribosomal protein uS11 family. As to quaternary structure, part of the 30S ribosomal subunit. Interacts with proteins S7 and S18. Binds to IF-3.

Located on the platform of the 30S subunit, it bridges several disparate RNA helices of the 16S rRNA. Forms part of the Shine-Dalgarno cleft in the 70S ribosome. In Methylocella silvestris (strain DSM 15510 / CIP 108128 / LMG 27833 / NCIMB 13906 / BL2), this protein is Small ribosomal subunit protein uS11.